Here is a 376-residue protein sequence, read N- to C-terminus: Transcription initiation factor IIA subunit 1 (376 aa).

Alanine 2 is subject to N-acetylalanine. Low complexity-rich tracts occupy residues 69-79 (QVQQQHQPQQQ) and 89-105 (QAQPQQTVPQQAQTQQV). Disordered stretches follow at residues 69-107 (QVQQQHQPQQQQHHHHHHHQQAQPQQTVPQQAQTQQVLI), 246-265 (AQAQITATGHQQPQAQPAQT), and 274-329 (DGTG…QELF). Phosphoserine; by TAF1 occurs at positions 280, 281, 316, and 321. Residues 280 to 329 (SSEEDEDEEEDYDDDEEEDKEKDGAEDGQVEEEPLNSEDDVSDEEGQELF) show a composition bias toward acidic residues. 2 residues coordinate DNA: histidine 343 and arginine 344.

The protein belongs to the TFIIA subunit 1 family. As to quaternary structure, TFIIA is a heterodimer of the large unprocessed subunit 1 and a small subunit gamma. It was originally believed to be a heterotrimer of an alpha (p35), a beta (p19) and a gamma subunit (p12). TFIIA forms a complex with TBP. Part of TBP-based Pol II pre-initiation complex (PIC), in which Pol II core assembles with general transcription factors and other specific initiation factors including GTF2E1, GTF2E2, GTF2F1, GTF2F2, TCEA1, ERCC2, ERCC3, GTF2H2, GTF2H3, GTF2H4, GTF2H5, GTF2A1, GTF2A2, GTF2B and TBP; this large multi-subunit PIC complex mediates DNA unwinding and targets Pol II core to the transcription start site where the first phosphodiester bond forms. Post-translationally, the alpha and beta subunits are postranslationally produced from the precursor formby TASP1. The cleavage promotes proteasomal degradation.

The protein resides in the nucleus. TFIIA is a component of the transcription machinery of RNA polymerase II and plays an important role in transcriptional activation. TFIIA in a complex with TBP mediates transcriptional activity. In Pongo abelii (Sumatran orangutan), this protein is Transcription initiation factor IIA subunit 1 (GTF2A1).